A 72-amino-acid polypeptide reads, in one-letter code: Translation initiation factor IF-1 (72 aa).

The region spanning 1–72 is the S1-like domain; that stretch reads MAKDDVIEVD…DKGRITYRHK (72 aa).

This sequence belongs to the IF-1 family. Component of the 30S ribosomal translation pre-initiation complex which assembles on the 30S ribosome in the order IF-2 and IF-3, IF-1 and N-formylmethionyl-tRNA(fMet); mRNA recruitment can occur at any time during PIC assembly.

The protein localises to the cytoplasm. Functionally, one of the essential components for the initiation of protein synthesis. Stabilizes the binding of IF-2 and IF-3 on the 30S subunit to which N-formylmethionyl-tRNA(fMet) subsequently binds. Helps modulate mRNA selection, yielding the 30S pre-initiation complex (PIC). Upon addition of the 50S ribosomal subunit IF-1, IF-2 and IF-3 are released leaving the mature 70S translation initiation complex. The chain is Translation initiation factor IF-1 from Helicobacter hepaticus (strain ATCC 51449 / 3B1).